A 264-amino-acid chain; its full sequence is Teichoic acids export ATP-binding protein TagH (264 aa).

Positions 22–243 (ERLKDVIVPF…YEKFLNDFKK (222 aa)) constitute an ABC transporter domain. 57-64 (GINGSGKS) provides a ligand contact to ATP.

This sequence belongs to the ABC transporter superfamily. Teichoic acids exporter (TC 3.A.1.104.1) family. In terms of assembly, the complex is composed of two ATP-binding proteins (TagH) and two transmembrane proteins (TagG).

It is found in the cell membrane. It carries out the reaction ATP + H2O + teichoic acidSide 1 = ADP + phosphate + teichoic acidSide 2.. Functionally, part of the ABC transporter complex TagGH involved in teichoic acids export. Responsible for energy coupling to the transport system. The sequence is that of Teichoic acids export ATP-binding protein TagH from Staphylococcus saprophyticus subsp. saprophyticus (strain ATCC 15305 / DSM 20229 / NCIMB 8711 / NCTC 7292 / S-41).